A 1007-amino-acid chain; its full sequence is Exportin-7 (1007 aa).

The protein belongs to the exportin family.

It localises to the nucleus. It is found in the cytoplasm. The protein localises to the nuclear pore complex. Its function is as follows. Mediates the nuclear export of proteins (cargos) with broad substrate specificity. The protein is Exportin-7 (xpo7) of Dictyostelium discoideum (Social amoeba).